Reading from the N-terminus, the 795-residue chain is Multiple C2 domain and transmembrane region protein 12 (795 aa).

C2 domains are found at residues arginine 24–tyrosine 142, valine 180–alanine 298, and tyrosine 341–tyrosine 463. Positions 57, 109, and 113 each coordinate Ca(2+). 4 helical membrane passes run cysteine 590 to isoleucine 610, tryptophan 612 to leucine 632, phenylalanine 730 to tryptophan 750, and leucine 752 to phenylalanine 772.

This sequence belongs to the MCTP family. Requires Ca(2+) as cofactor. Expressed in root vascular tissues and meristems. Observed in flowers.

It is found in the endoplasmic reticulum membrane. Functionally, may function as a signaling molecule by regulating the trafficking of other regulators. In Arabidopsis thaliana (Mouse-ear cress), this protein is Multiple C2 domain and transmembrane region protein 12.